A 310-amino-acid polypeptide reads, in one-letter code: Ribosomal RNA small subunit methyltransferase H (310 aa).

S-adenosyl-L-methionine is bound by residues 32-34, aspartate 51, phenylalanine 78, aspartate 99, and glutamine 106; that span reads AGH.

The protein belongs to the methyltransferase superfamily. RsmH family.

The protein localises to the cytoplasm. It carries out the reaction cytidine(1402) in 16S rRNA + S-adenosyl-L-methionine = N(4)-methylcytidine(1402) in 16S rRNA + S-adenosyl-L-homocysteine + H(+). Its function is as follows. Specifically methylates the N4 position of cytidine in position 1402 (C1402) of 16S rRNA. This Macrococcus caseolyticus (strain JCSC5402) (Macrococcoides caseolyticum) protein is Ribosomal RNA small subunit methyltransferase H.